Here is an 807-residue protein sequence, read N- to C-terminus: Protein WEAK CHLOROPLAST MOVEMENT UNDER BLUE LIGHT 1 (807 aa).

The tract at residues 1 to 162 (MEDLKTVEAS…GTPKNVDSHR (162 aa)) is disordered. Over residues 31–40 (RESNIQSATK) the composition is skewed to polar residues. Positions 46 to 73 (QSQTDTEETQQSQTDTEETQQSQTDDTT) are enriched in low complexity. A compositionally biased stretch (polar residues) spans 138 to 157 (RTVSSPRFSGSPVSTGTPKN). Ser148 is modified (phosphoserine). 4 coiled-coil regions span residues 191–429 (RMQA…ELVA), 457–489 (DLHA…LKLA), 516–621 (IAVA…ALEE), and 664–724 (AAVS…WRAE). 2 disordered regions span residues 532-565 (IASV…EAKS) and 722-789 (RAEH…KKKK). Composition is skewed to basic and acidic residues over residues 537–548 (SKEKDAREKMVE), 722–732 (RAEHEQKRKAG), and 739–749 (KNLKESFEGGK). Residues 761-781 (SSPSESYGTEENSETNLSPQT) show a composition bias toward polar residues.

It belongs to the WEB family. In terms of assembly, interacts with PMI2. Ubiquitous but preferentially in chloroplast-containing tissues.

It is found in the cytoplasm. Functionally, required for the chloroplast avoidance response under high intensity blue light. This avoidance response consists in the relocation of chloroplasts on the anticlinal side of exposed cells. Acts in association with PMI2 to maintain the velocity of chloroplast photorelocation movement via cp-actin filaments regulation. This Arabidopsis thaliana (Mouse-ear cress) protein is Protein WEAK CHLOROPLAST MOVEMENT UNDER BLUE LIGHT 1 (WEB1).